An 825-amino-acid polypeptide reads, in one-letter code: E3 ubiquitin-protein ligase ICP0 (825 aa).

Positions 1-10 (MEPRPGTSSR) are enriched in polar residues. Residues 1-121 (MEPRPGTSSR…VGEEEAEAGG (121 aa)) form a disordered region. Over residues 46 to 57 (DSEEETEVGISD) the composition is skewed to acidic residues. An RING-type zinc finger spans residues 126–167 (CAVCTDEIAPPLRCQSFPCLHPFCIPCMKTWIPLRNTCPLCN). Disordered regions lie at residues 221–312 (RSLS…GGGP), 325–683 (PPAA…PAPG), and 803–825 (RHPW…GHGE). Residues 242–251 (TDDEDDDLAD) are compositionally biased toward acidic residues. 3 stretches are compositionally biased toward low complexity: residues 273–283 (TRGTSQPAATR), 290–303 (PRSS…LRAG), and 350–367 (PPAR…VISD). Residues 368–379 (SPPPSPRRPAGP) are compositionally biased toward pro residues. 2 stretches are compositionally biased toward low complexity: residues 380–394 (GPLS…QVSS) and 402–439 (PQSS…DAAG). Positions 456–468 (RMTQAQTDTQAQS) are enriched in polar residues. Gly residues predominate over residues 479–491 (GSGGPGAEGGPGV). Composition is skewed to low complexity over residues 492 to 510 (PRGT…GAAA) and 519 to 540 (DSGP…PLAP). Over residues 552 to 563 (RAPDSDSGDRGH) the composition is skewed to basic and acidic residues. Over residues 567 to 641 (APASAGAAPP…GGSVASASGA (75 aa)) the composition is skewed to low complexity. Positions 658-667 (GPRKCARKTR) are enriched in basic residues. Residues 811 to 825 (GAPAPAGDAPAGHGE) are compositionally biased toward low complexity.

Auto-ubiquitinated.

It carries out the reaction S-ubiquitinyl-[E2 ubiquitin-conjugating enzyme]-L-cysteine + [acceptor protein]-L-lysine = [E2 ubiquitin-conjugating enzyme]-L-cysteine + N(6)-ubiquitinyl-[acceptor protein]-L-lysine.. Evades nuclear antiviral defenses triggered by dsDNA viruses. Acts during the initial stages of lytic infection and the reactivation of latent viral genome. Prevents the antiviral effect of nuclear bodies by degrading host PML and SP100. Prevents antiviral response to viral DNA induced by IFI16 by degrading it. Additionally, inhibits host IRF3 nuclear signaling to prevent interferon production by the infected cells. This Homo sapiens (Human) protein is E3 ubiquitin-protein ligase ICP0 (RL2).